The following is a 280-amino-acid chain: UPF0276 protein NMB2142 (280 aa).

The protein belongs to the UPF0276 family.

This is UPF0276 protein NMB2142 from Neisseria meningitidis serogroup B (strain ATCC BAA-335 / MC58).